Consider the following 325-residue polypeptide: GTP 3',8-cyclase (325 aa).

The 216-residue stretch at 4 to 219 folds into the Radical SAM core domain; sequence NYNRNINYLR…HGLQQKFGLL (216 aa). Residue Arg-13 coordinates GTP. Cys-20 and Cys-24 together coordinate [4Fe-4S] cluster. Tyr-26 contributes to the S-adenosyl-L-methionine binding site. Residue Cys-27 coordinates [4Fe-4S] cluster. GTP is bound at residue Arg-63. An S-adenosyl-L-methionine-binding site is contributed by Gly-67. Residue Thr-94 coordinates GTP. Ser-118 contributes to the S-adenosyl-L-methionine binding site. GTP is bound at residue Lys-155. Met-189 contacts S-adenosyl-L-methionine. [4Fe-4S] cluster-binding residues include Cys-254 and Cys-257. 259–261 provides a ligand contact to GTP; it reads RLR. [4Fe-4S] cluster is bound at residue Cys-271.

It belongs to the radical SAM superfamily. MoaA family. Monomer and homodimer. It depends on [4Fe-4S] cluster as a cofactor.

The enzyme catalyses GTP + AH2 + S-adenosyl-L-methionine = (8S)-3',8-cyclo-7,8-dihydroguanosine 5'-triphosphate + 5'-deoxyadenosine + L-methionine + A + H(+). The protein operates within cofactor biosynthesis; molybdopterin biosynthesis. In terms of biological role, catalyzes the cyclization of GTP to (8S)-3',8-cyclo-7,8-dihydroguanosine 5'-triphosphate. In Desulforamulus reducens (strain ATCC BAA-1160 / DSM 100696 / MI-1) (Desulfotomaculum reducens), this protein is GTP 3',8-cyclase.